Reading from the N-terminus, the 95-residue chain is Protein TusB (95 aa).

It belongs to the DsrH/TusB family. As to quaternary structure, heterohexamer, formed by a dimer of trimers. The hexameric TusBCD complex contains 2 copies each of TusB, TusC and TusD. The TusBCD complex interacts with TusE.

The protein resides in the cytoplasm. Its function is as follows. Part of a sulfur-relay system required for 2-thiolation of 5-methylaminomethyl-2-thiouridine (mnm(5)s(2)U) at tRNA wobble positions. The protein is Protein TusB of Escherichia coli O81 (strain ED1a).